The chain runs to 387 residues: Solute carrier family 25 protein Shawn (387 aa).

Solcar repeat units lie at residues 37–156 (IRPL…FKAR), 179–263 (IPFL…LKSS), and 269–366 (PTFS…GKSF). 6 helical membrane passes run 43-63 (VASA…LDVI), 128-148 (LWSG…IYFV), 179-199 (IPFL…VTCV), 235-255 (LWRG…IYWT), 275-295 (FAAG…FDVV), and 337-357 (AIFS…AIMI).

The protein belongs to the mitochondrial carrier (TC 2.A.29) family.

The protein localises to the mitochondrion inner membrane. Mitochondrial transporter required for glutathione import into mitochondria. This is Solute carrier family 25 protein Shawn from Drosophila melanogaster (Fruit fly).